We begin with the raw amino-acid sequence, 512 residues long: Cytochrome P450 monooxygenase pbrB (512 aa).

Residues 6–29 (LSFPAAVGAAFGAFAIYVVARCIY) traverse the membrane as a helical segment. Residue C452 coordinates heme.

The protein belongs to the cytochrome P450 family. It depends on heme as a cofactor.

The protein resides in the membrane. Its pathway is secondary metabolite biosynthesis; terpenoid biosynthesis. Its function is as follows. Cytochrome P450 monooxygenase; part of the gene cluster that mediates the biosynthesis of the sesquiterpenoid aspterric acid (AA), an inhibitor of dihydroxy-acid dehydratase (DHAD) effective as an herbicide. PbrB catalyzes the second step within the pathway and converts (-)-daucane produced by the terpene cyclase pbrA into an alpha-epoxy carboxylate intermediate which is further converted into the tricyclic aspterric acid by the cytochrome P450 monooxygenase pbrC. This is Cytochrome P450 monooxygenase pbrB from Penicillium brasilianum.